Consider the following 161-residue polypeptide: Ubiquitin-conjugating enzyme E2Q-like protein 1 (161 aa).

The 154-residue stretch at 1-154 (MKELQDIARL…VKTHEKYGWV (154 aa)) folds into the UBC core domain. Cysteine 88 (glycyl thioester intermediate) is an active-site residue.

It belongs to the ubiquitin-conjugating enzyme family. In terms of assembly, interacts with FBXW7.

Its subcellular location is the nucleus. It carries out the reaction S-ubiquitinyl-[E1 ubiquitin-activating enzyme]-L-cysteine + [E2 ubiquitin-conjugating enzyme]-L-cysteine = [E1 ubiquitin-activating enzyme]-L-cysteine + S-ubiquitinyl-[E2 ubiquitin-conjugating enzyme]-L-cysteine.. It functions in the pathway protein modification; protein ubiquitination. Functionally, probable E2 ubiquitin-protein ligase that catalyzes the covalent attachment of ubiquitin to target proteins. May facilitate the monoubiquitination and degradation of MTOR and CCNE1 through interaction with FBXW7. In Mus musculus (Mouse), this protein is Ubiquitin-conjugating enzyme E2Q-like protein 1 (Ube2ql1).